The primary structure comprises 601 residues: Sodium-dependent phosphate transport protein 2C (601 aa).

Residues 1–75 (MPNSLAGGQV…RRVVSSFLKA (75 aa)) are Cytoplasmic-facing. Ser-4 is modified (phosphoserine). Residues 76–96 (CGLLGSLYFFICSLDILSSAF) traverse the membrane as a helical segment. Residues 97 to 110 (QLLGSKMAGDIFKD) are Extracellular-facing. Residues 111–131 (NVVLSNPVAGLVIGVLVTVLV) traverse the membrane as a helical segment. The Cytoplasmic portion of the chain corresponds to 132–187 (QSSSTSSSIVVSMVASKLLTVQVSVPIIMGVNVGTSITSTLVSMAQSGDRDEFQRA). A helical transmembrane segment spans residues 188–208 (FSGSAVHGIFNWLTVLVLLPL). Residues 209–324 (ESATAALERL…FAGSKLTDLA (116 aa)) lie on the Extracellular side of the membrane. Asn-264, Asn-267, and Asn-299 each carry an N-linked (GlcNAc...) asparagine glycan. A disulfide bridge links Cys-275 with Cys-311. A helical membrane pass occupies residues 325 to 345 (VGFILLAGSLLVLCVCLVLIV). The Cytoplasmic portion of the chain corresponds to 346–369 (KLLNSVLKGRIAQAVKTVINADFP). Residues 370 to 390 (FPFGWLSGYLAILVGAGLTFL) form a helical membrane-spanning segment. Residues 391 to 441 (LQSSSVFTAAIVPLMGVGVIDLERAYPLFLGSNIGTTTTALLAALASPADM) are Extracellular-facing. The chain crosses the membrane as a helical span at residues 442 to 462 (LIFAVQVALIHFFFNLAGILL). The Cytoplasmic segment spans residues 463-487 (WYLVPVLRLPIPLAKRFGNLTAQYR). Residues 488–508 (WVAIVYLLLTFLLLPLAAFGL) form a helical membrane-spanning segment. Topologically, residues 509-512 (SLAG) are extracellular. The chain crosses the membrane as a helical span at residues 513–533 (GTVLAAVGGPLVGLVLLIILV). The Cytoplasmic portion of the chain corresponds to 534-601 (NVLQQHRPSW…NPQVIASQQL (68 aa)).

Belongs to the SLC34A transporter family. In terms of tissue distribution, expressed only in the kidney.

It localises to the apical cell membrane. The catalysed reaction is 2 Na(+)(out) + phosphate(out) = 2 Na(+)(in) + phosphate(in). Involved in actively transporting phosphate into cells via Na(+) cotransport in the renal brush border membrane. The cotransport has a Na(+):Pi stoichiometry of 2:1 and is electroneutral. The sequence is that of Sodium-dependent phosphate transport protein 2C (Slc34a3) from Mus musculus (Mouse).